We begin with the raw amino-acid sequence, 291 residues long: Elongation factor Ts (291 aa).

The tract at residues 84 to 87 (TDFV) is involved in Mg(2+) ion dislocation from EF-Tu.

Belongs to the EF-Ts family.

It is found in the cytoplasm. Functionally, associates with the EF-Tu.GDP complex and induces the exchange of GDP to GTP. It remains bound to the aminoacyl-tRNA.EF-Tu.GTP complex up to the GTP hydrolysis stage on the ribosome. This is Elongation factor Ts from Bifidobacterium adolescentis (strain ATCC 15703 / DSM 20083 / NCTC 11814 / E194a).